A 214-amino-acid polypeptide reads, in one-letter code: Imidazole glycerol phosphate synthase subunit HisH (214 aa).

The Glutamine amidotransferase type-1 domain maps to Thr3–Ala211. Cys81 serves as the catalytic Nucleophile. Catalysis depends on residues His186 and Glu188.

As to quaternary structure, heterodimer of HisH and HisF.

The protein resides in the cytoplasm. It catalyses the reaction 5-[(5-phospho-1-deoxy-D-ribulos-1-ylimino)methylamino]-1-(5-phospho-beta-D-ribosyl)imidazole-4-carboxamide + L-glutamine = D-erythro-1-(imidazol-4-yl)glycerol 3-phosphate + 5-amino-1-(5-phospho-beta-D-ribosyl)imidazole-4-carboxamide + L-glutamate + H(+). It carries out the reaction L-glutamine + H2O = L-glutamate + NH4(+). Its pathway is amino-acid biosynthesis; L-histidine biosynthesis; L-histidine from 5-phospho-alpha-D-ribose 1-diphosphate: step 5/9. IGPS catalyzes the conversion of PRFAR and glutamine to IGP, AICAR and glutamate. The HisH subunit catalyzes the hydrolysis of glutamine to glutamate and ammonia as part of the synthesis of IGP and AICAR. The resulting ammonia molecule is channeled to the active site of HisF. This Trichodesmium erythraeum (strain IMS101) protein is Imidazole glycerol phosphate synthase subunit HisH.